The following is a 316-amino-acid chain: 4-hydroxy-3-methylbut-2-enyl diphosphate reductase (316 aa).

Cysteine 12 is a [4Fe-4S] cluster binding site. (2E)-4-hydroxy-3-methylbut-2-enyl diphosphate-binding residues include histidine 43 and histidine 81. Dimethylallyl diphosphate-binding residues include histidine 43 and histidine 81. The isopentenyl diphosphate site is built by histidine 43 and histidine 81. Cysteine 103 provides a ligand contact to [4Fe-4S] cluster. Residue histidine 131 participates in (2E)-4-hydroxy-3-methylbut-2-enyl diphosphate binding. Residue histidine 131 coordinates dimethylallyl diphosphate. Histidine 131 contributes to the isopentenyl diphosphate binding site. Glutamate 133 (proton donor) is an active-site residue. Threonine 170 contributes to the (2E)-4-hydroxy-3-methylbut-2-enyl diphosphate binding site. [4Fe-4S] cluster is bound at residue cysteine 198. Residues serine 226, asparagine 228, and serine 271 each coordinate (2E)-4-hydroxy-3-methylbut-2-enyl diphosphate. 3 residues coordinate dimethylallyl diphosphate: serine 226, asparagine 228, and serine 271. Residues serine 226, asparagine 228, and serine 271 each coordinate isopentenyl diphosphate.

This sequence belongs to the IspH family. It depends on [4Fe-4S] cluster as a cofactor.

It carries out the reaction isopentenyl diphosphate + 2 oxidized [2Fe-2S]-[ferredoxin] + H2O = (2E)-4-hydroxy-3-methylbut-2-enyl diphosphate + 2 reduced [2Fe-2S]-[ferredoxin] + 2 H(+). The enzyme catalyses dimethylallyl diphosphate + 2 oxidized [2Fe-2S]-[ferredoxin] + H2O = (2E)-4-hydroxy-3-methylbut-2-enyl diphosphate + 2 reduced [2Fe-2S]-[ferredoxin] + 2 H(+). It participates in isoprenoid biosynthesis; dimethylallyl diphosphate biosynthesis; dimethylallyl diphosphate from (2E)-4-hydroxy-3-methylbutenyl diphosphate: step 1/1. It functions in the pathway isoprenoid biosynthesis; isopentenyl diphosphate biosynthesis via DXP pathway; isopentenyl diphosphate from 1-deoxy-D-xylulose 5-phosphate: step 6/6. Functionally, catalyzes the conversion of 1-hydroxy-2-methyl-2-(E)-butenyl 4-diphosphate (HMBPP) into a mixture of isopentenyl diphosphate (IPP) and dimethylallyl diphosphate (DMAPP). Acts in the terminal step of the DOXP/MEP pathway for isoprenoid precursor biosynthesis. This is 4-hydroxy-3-methylbut-2-enyl diphosphate reductase from Bacillus cereus (strain AH820).